A 675-amino-acid chain; its full sequence is DNA ligase (675 aa).

NAD(+) contacts are provided by residues 35–39 (DEAYD), 84–85 (SL), and Glu-116. Catalysis depends on Lys-118, which acts as the N6-AMP-lysine intermediate. Arg-139, Glu-180, Lys-296, and Lys-320 together coordinate NAD(+). Positions 414, 417, 432, and 437 each coordinate Zn(2+). The BRCT domain occupies 597-675 (PVDAFWNGKT…EREFLERLGM (79 aa)).

This sequence belongs to the NAD-dependent DNA ligase family. LigA subfamily. Mg(2+) is required as a cofactor. The cofactor is Mn(2+).

It catalyses the reaction NAD(+) + (deoxyribonucleotide)n-3'-hydroxyl + 5'-phospho-(deoxyribonucleotide)m = (deoxyribonucleotide)n+m + AMP + beta-nicotinamide D-nucleotide.. In terms of biological role, DNA ligase that catalyzes the formation of phosphodiester linkages between 5'-phosphoryl and 3'-hydroxyl groups in double-stranded DNA using NAD as a coenzyme and as the energy source for the reaction. It is essential for DNA replication and repair of damaged DNA. In Syntrophobacter fumaroxidans (strain DSM 10017 / MPOB), this protein is DNA ligase.